The following is a 315-amino-acid chain: Small ribosomal subunit biogenesis GTPase RsgA (315 aa).

The region spanning Leu79 to Phe243 is the CP-type G domain. GTP-binding positions include Asn128–Asp131 and Gly182–Ser190. Positions 267, 272, 274, and 280 each coordinate Zn(2+).

It belongs to the TRAFAC class YlqF/YawG GTPase family. RsgA subfamily. As to quaternary structure, monomer. Associates with 30S ribosomal subunit, binds 16S rRNA. Zn(2+) is required as a cofactor.

Its subcellular location is the cytoplasm. In terms of biological role, one of several proteins that assist in the late maturation steps of the functional core of the 30S ribosomal subunit. Helps release RbfA from mature subunits. May play a role in the assembly of ribosomal proteins into the subunit. Circularly permuted GTPase that catalyzes slow GTP hydrolysis, GTPase activity is stimulated by the 30S ribosomal subunit. The polypeptide is Small ribosomal subunit biogenesis GTPase RsgA (Porphyromonas gingivalis (strain ATCC 33277 / DSM 20709 / CIP 103683 / JCM 12257 / NCTC 11834 / 2561)).